The sequence spans 604 residues: Tyrosine-protein kinase transforming protein erbB (604 aa).

The 268-residue stretch at F132–L399 folds into the Protein kinase domain. Residues L138 to I146 and K165 each bind ATP. The active-site Proton acceptor is the D257.

It belongs to the protein kinase superfamily. Tyr protein kinase family. EGF receptor subfamily.

It carries out the reaction L-tyrosyl-[protein] + ATP = O-phospho-L-tyrosyl-[protein] + ADP + H(+). Functionally, the v-erbB oncogene transforms avian fibroblasts and erythroblasts in culture and induces sarcomas and erythroleukemias in chickens. It is a truncated and mutated version of the receptor for epidermal growth factor. The chain is Tyrosine-protein kinase transforming protein erbB (V-ERBB) from Galliformes.